A 262-amino-acid polypeptide reads, in one-letter code: Pyridoxine 5'-phosphate synthase (262 aa).

N6 contacts 3-amino-2-oxopropyl phosphate. 1-deoxy-D-xylulose 5-phosphate is bound at residue 8–9 (DH). Residue R17 coordinates 3-amino-2-oxopropyl phosphate. H43 serves as the catalytic Proton acceptor. Positions 45 and 50 each coordinate 1-deoxy-D-xylulose 5-phosphate. The Proton acceptor role is filled by E70. A 1-deoxy-D-xylulose 5-phosphate-binding site is contributed by T102. The active-site Proton donor is H215. Residues G216 and 237 to 238 (GH) contribute to the 3-amino-2-oxopropyl phosphate site.

Belongs to the PNP synthase family. Homooctamer; tetramer of dimers.

It localises to the cytoplasm. The enzyme catalyses 3-amino-2-oxopropyl phosphate + 1-deoxy-D-xylulose 5-phosphate = pyridoxine 5'-phosphate + phosphate + 2 H2O + H(+). It participates in cofactor biosynthesis; pyridoxine 5'-phosphate biosynthesis; pyridoxine 5'-phosphate from D-erythrose 4-phosphate: step 5/5. In terms of biological role, catalyzes the complicated ring closure reaction between the two acyclic compounds 1-deoxy-D-xylulose-5-phosphate (DXP) and 3-amino-2-oxopropyl phosphate (1-amino-acetone-3-phosphate or AAP) to form pyridoxine 5'-phosphate (PNP) and inorganic phosphate. In Helicobacter acinonychis (strain Sheeba), this protein is Pyridoxine 5'-phosphate synthase.